Consider the following 931-residue polypeptide: DNA mismatch repair protein MutS (931 aa).

The segment covering 1-10 has biased composition (low complexity); it reads MMDDTAMPAR. A disordered region spans residues 1 to 34; it reads MMDDTAMPARAEADAAEDELAAPAGIDRTAKADK. 674–681 is an ATP binding site; the sequence is GPNMAGKS.

This sequence belongs to the DNA mismatch repair MutS family.

In terms of biological role, this protein is involved in the repair of mismatches in DNA. It is possible that it carries out the mismatch recognition step. This protein has a weak ATPase activity. The chain is DNA mismatch repair protein MutS from Azorhizobium caulinodans (strain ATCC 43989 / DSM 5975 / JCM 20966 / LMG 6465 / NBRC 14845 / NCIMB 13405 / ORS 571).